We begin with the raw amino-acid sequence, 106 residues long: UPF0060 membrane protein AZC_0909 (106 aa).

4 helical membrane-spanning segments follow: residues 4–24 (PLFALAALAEIAGCFAFWHVV), 27–47 (GGSPLWLAPGVLSLVAFAALL), 58–78 (AFAAYGGIYILASLGWMWAAE), and 84–104 (RFDALGAAICLAGACVILFAP).

This sequence belongs to the UPF0060 family.

It localises to the cell inner membrane. The polypeptide is UPF0060 membrane protein AZC_0909 (Azorhizobium caulinodans (strain ATCC 43989 / DSM 5975 / JCM 20966 / LMG 6465 / NBRC 14845 / NCIMB 13405 / ORS 571)).